Consider the following 192-residue polypeptide: Peptidyl-tRNA hydrolase (192 aa).

Residue tyrosine 17 coordinates tRNA. The active-site Proton acceptor is histidine 22. TRNA-binding residues include phenylalanine 68, asparagine 70, and asparagine 116.

It belongs to the PTH family. As to quaternary structure, monomer.

It localises to the cytoplasm. The enzyme catalyses an N-acyl-L-alpha-aminoacyl-tRNA + H2O = an N-acyl-L-amino acid + a tRNA + H(+). Functionally, hydrolyzes ribosome-free peptidyl-tRNAs (with 1 or more amino acids incorporated), which drop off the ribosome during protein synthesis, or as a result of ribosome stalling. In terms of biological role, catalyzes the release of premature peptidyl moieties from peptidyl-tRNA molecules trapped in stalled 50S ribosomal subunits, and thus maintains levels of free tRNAs and 50S ribosomes. The sequence is that of Peptidyl-tRNA hydrolase from Xylella fastidiosa (strain M12).